A 117-amino-acid chain; its full sequence is Large ribosomal subunit protein bL19 (117 aa).

Belongs to the bacterial ribosomal protein bL19 family.

Its function is as follows. This protein is located at the 30S-50S ribosomal subunit interface and may play a role in the structure and function of the aminoacyl-tRNA binding site. This chain is Large ribosomal subunit protein bL19, found in Shewanella piezotolerans (strain WP3 / JCM 13877).